The chain runs to 376 residues: 26S proteasome non-ATPase regulatory subunit 4 (376 aa).

A VWFA domain is found at 5 to 188 (STMVCVDNSE…LADALISSPI (184 aa)). K122 participates in a covalent cross-link: Glycyl lysine isopeptide (Lys-Gly) (interchain with G-Cter in SUMO2). Residues 197 to 262 (LGLGASDFEF…TEDSDDALLK (66 aa)) form an interaction with UBQLN1 region. A UIM 1 domain is found at 211–230 (SADPELALALRVSMEEQRQR). The span at 224-237 (MEEQRQRQEEEARR) shows a compositional bias: basic and acidic residues. Residues 224–257 (MEEQRQRQEEEARRAAAASAAEAGIATPGTEDSD) form a disordered region. Phosphothreonine is present on residues T250 and T253. Phosphoserine is present on residues S256 and A259. One can recognise a UIM 2 domain in the interval 282–301 (TEEEQIAYAMQMSLQGTEFS). The interval 355–376 (MGALASQATKDGKNDKKEEEKK) is disordered. A Phosphoserine modification is found at S360. A compositionally biased stretch (basic and acidic residues) spans 364–376 (KDGKNDKKEEEKK).

Belongs to the proteasome subunit S5A family. In terms of assembly, component of the 19S proteasome regulatory particle complex. The 26S proteasome consists of a 20S core particle (CP) and two 19S regulatory subunits (RP). The regulatory particle is made of a lid composed of 9 subunits, a base containing 6 ATPases and few additional components including PSMD4. Interacts with NUB1. Interacts with SQSTM1. Interacts with UBQLN4. Interacts with UBE3A. Interacts with UBQLN1 (via ubiquitin-like domain). Interacts with DDI2. Isoform Rpn10A is ubiquitous whereas isoform Rpn10E is mostly expressed in the embryonic brain.

Component of the 26S proteasome, a multiprotein complex involved in the ATP-dependent degradation of ubiquitinated proteins. This complex plays a key role in the maintenance of protein homeostasis by removing misfolded or damaged proteins, which could impair cellular functions, and by removing proteins whose functions are no longer required. Therefore, the proteasome participates in numerous cellular processes, including cell cycle progression, apoptosis, or DNA damage repair. PSMD4 acts as an ubiquitin receptor subunit through ubiquitin-interacting motifs and selects ubiquitin-conjugates for destruction. Displays a preferred selectivity for longer polyubiquitin chains. The polypeptide is 26S proteasome non-ATPase regulatory subunit 4 (Psmd4) (Mus musculus (Mouse)).